A 181-amino-acid polypeptide reads, in one-letter code: Oligoribonuclease (181 aa).

Positions leucine 8–leucine 171 constitute an Exonuclease domain. Tyrosine 129 is a catalytic residue.

The protein belongs to the oligoribonuclease family.

It is found in the cytoplasm. 3'-to-5' exoribonuclease specific for small oligoribonucleotides. This Serratia proteamaculans (strain 568) protein is Oligoribonuclease.